Reading from the N-terminus, the 817-residue chain is LPS-assembly protein LptD (817 aa).

Residues 1–26 (MPALVVSPDLVRGAAGASAAPTPAPA) form the signal peptide. The segment at 1–101 (MPALVVSPDL…ARKPGSTEVR (101 aa)) is disordered. The span at 13–90 (GAAGASAAPT…PAASASPADA (78 aa)) shows a compositional bias: low complexity.

The protein belongs to the LptD family. Component of the lipopolysaccharide transport and assembly complex. Interacts with LptE and LptA.

It localises to the cell outer membrane. Its function is as follows. Together with LptE, is involved in the assembly of lipopolysaccharide (LPS) at the surface of the outer membrane. This Azoarcus sp. (strain BH72) protein is LPS-assembly protein LptD.